The sequence spans 169 residues: N-alpha-acetyltransferase 50 (169 aa).

One can recognise an N-acetyltransferase domain in the interval Ile5–Lys154. Residue Tyr30 coordinates substrate. Tyr72 is an active-site residue. Residue Met74 participates in substrate binding. Leu76–Thr89 contacts acetyl-CoA. Residue Cys78 to Thr89 participates in CoA binding. His111 is an active-site residue. Asn116 to Lys125 is a CoA binding site. Residues Tyr137 to Arg140 form a substrate region.

The protein belongs to the acetyltransferase family. GNAT subfamily.

The protein localises to the cytoplasm. It is found in the nucleus. It catalyses the reaction N-terminal L-methionyl-L-alanyl-[protein] + acetyl-CoA = N-terminal N(alpha)-acetyl-L-methionyl-L-alanyl-[protein] + CoA + H(+). The enzyme catalyses N-terminal L-methionyl-L-seryl-[protein] + acetyl-CoA = N-terminal N(alpha)-acetyl-L-methionyl-L-seryl-[protein] + CoA + H(+). It carries out the reaction N-terminal L-methionyl-L-valyl-[protein] + acetyl-CoA = N-terminal N(alpha)-acetyl-L-methionyl-L-valyl-[protein] + CoA + H(+). The catalysed reaction is N-terminal L-methionyl-L-threonyl-[protein] + acetyl-CoA = N-terminal N(alpha)-acetyl-L-methionyl-L-threonyl-[protein] + CoA + H(+). It catalyses the reaction N-terminal L-methionyl-L-lysyl-[protein] + acetyl-CoA = N-terminal N(alpha)-acetyl-L-methionyl-L-lysyl-[protein] + CoA + H(+). The enzyme catalyses N-terminal L-methionyl-L-leucyl-[protein] + acetyl-CoA = N-terminal N(alpha)-acetyl-L-methionyl-L-leucyl-[protein] + CoA + H(+). It carries out the reaction N-terminal L-methionyl-L-phenylalanyl-[protein] + acetyl-CoA = N-terminal N(alpha)-acetyl-L-methionyl-L-phenylalanyl-[protein] + CoA + H(+). The catalysed reaction is N-terminal L-methionyl-L-tyrosyl-[protein] + acetyl-CoA = N-terminal N(alpha)-acetyl-L-methionyl-L-tyrosyl-[protein] + CoA + H(+). Functionally, N-alpha-acetyltransferase that acetylates the N-terminus of proteins that retain their initiating methionine. Has a broad substrate specificity: able to acetylate the initiator methionine of most peptides, except for those with a proline in second position. Also displays N-epsilon-acetyltransferase activity by mediating acetylation of the side chain of specific lysines on proteins. The relevance of N-epsilon-acetyltransferase activity is however unclear. Required for sister chromatid cohesion during mitosis by promoting binding of CDCA5/sororin to cohesin. In Xenopus tropicalis (Western clawed frog), this protein is N-alpha-acetyltransferase 50 (naa50).